We begin with the raw amino-acid sequence, 396 residues long: MIISAASDYRAAAQRTLPPFLFHYIDGGAYAEYTLRRNVEDLSQVALRQRVLKNMSDLSLETTLFNETLSMPVALAPVGLCGMYARRGEVQAAAAADAKGIPFTLSTVSVCPIEEVAPTIQRPMWFQLYVLRDRGFMRNALERAKAAGCSTLVFTVDMPTPGARYRDAHSGMSGPNAAMRRYWQAVMHPKWAWDVGLNGRPHDLGNISAYLGKPTGLEDYIGWLANNFDPSISWKDLEWIREFWDGPMVIKGLLDPEDARDAVRFGADGIVVSNHGGRQLDGVLSSARALPAIADAVKGDIAILADSGIRNGLDVVRMIALGADTVLLGRAYLYALATAGKAGVANLLDLIEKEMKVAMTLTGAKTISEISGDSLVQELGKSLPAALAPMSKGDAA.

Positions 1–380 (MIISAASDYR…SGDSLVQELG (380 aa)) constitute an FMN hydroxy acid dehydrogenase domain. Tyr-24 contacts substrate. 2 residues coordinate FMN: Ser-106 and Gln-127. Residue Tyr-129 participates in substrate binding. Thr-155 is an FMN binding site. Arg-164 contributes to the substrate binding site. FMN is bound at residue Lys-251. His-275 acts as the Proton acceptor in catalysis. Arg-278 is a binding site for substrate. 306-330 (DSGIRNGLDVVRMIALGADTVLLGR) is an FMN binding site.

Belongs to the FMN-dependent alpha-hydroxy acid dehydrogenase family. The cofactor is FMN.

It is found in the cell inner membrane. It catalyses the reaction (S)-lactate + A = pyruvate + AH2. Its function is as follows. Catalyzes the conversion of L-lactate to pyruvate. Is coupled to the respiratory chain. The polypeptide is L-lactate dehydrogenase (Salmonella paratyphi C (strain RKS4594)).